Consider the following 472-residue polypeptide: MPREIITLQVGQCGNQIGMEFWKQLCLEHGISKEGMLEDFATQGGDRKDVFFYQADDEHYIPRALLLDLEPRVINGIQNSEYRNLYNHENVFVADHGGGAGNNWASGYHQGEQVEEDIMDMIDREADGSDSLEGFVLCHSIAGGTGSGMGSYLLEALNDRYSKKLVQTYSVFPNQMETSDVVVQPYNSLLTLNKRLTINADCVVVLDNTALNRIAVDRLHIPNPTFAQTNSLVSTVMSASTTTLRYPGYMNNDLVGLVASLIPTPRCHFLMTGYTPLTVERQANAIRKTTVLDVMRRLLQAKNIMVSSYARTKEASQAKYISILNIIQGEVDPTQVHKSLQRIRERKLANFIEWGPASIQVALSRKSPYVQTAHRVSGLMLASHTSIRHLFSKCINQYEKLRKKQAFLDNYRKFPMFADNDLTEFDESREIVQSLVDEYKACESADYIKWGMEDRSKTLSADGTMDLSLPSS.

A GTP-binding site is contributed by 142 to 148; the sequence is AGGTGSG.

It belongs to the tubulin family.

It is found in the cytoplasm. It localises to the cytoskeleton. The protein resides in the microtubule organizing center. Functionally, tubulin is the major constituent of microtubules. The gamma chain is found at microtubule organizing centers (MTOC) such as the spindle poles, suggesting that it is involved in the minus-end nucleation of microtubule assembly. The protein is Tubulin gamma chain (TUBG) of Anemia phyllitidis (Fern).